The chain runs to 185 residues: Large ribosomal subunit protein uL5 (185 aa).

The protein belongs to the universal ribosomal protein uL5 family. As to quaternary structure, part of the 50S ribosomal subunit; part of the 5S rRNA/L5/L18/L25 subcomplex. Contacts the 5S rRNA and the P site tRNA. Forms a bridge to the 30S subunit in the 70S ribosome.

This is one of the proteins that bind and probably mediate the attachment of the 5S RNA into the large ribosomal subunit, where it forms part of the central protuberance. In the 70S ribosome it contacts protein S13 of the 30S subunit (bridge B1b), connecting the 2 subunits; this bridge is implicated in subunit movement. Contacts the P site tRNA; the 5S rRNA and some of its associated proteins might help stabilize positioning of ribosome-bound tRNAs. This chain is Large ribosomal subunit protein uL5, found in Parabacteroides distasonis (strain ATCC 8503 / DSM 20701 / CIP 104284 / JCM 5825 / NCTC 11152).